The sequence spans 302 residues: Glycine--tRNA ligase alpha subunit (302 aa).

This sequence belongs to the class-II aminoacyl-tRNA synthetase family. In terms of assembly, tetramer of two alpha and two beta subunits.

The protein localises to the cytoplasm. It catalyses the reaction tRNA(Gly) + glycine + ATP = glycyl-tRNA(Gly) + AMP + diphosphate. This is Glycine--tRNA ligase alpha subunit from Xanthomonas axonopodis pv. citri (strain 306).